A 254-amino-acid chain; its full sequence is 3-deoxy-manno-octulosonate cytidylyltransferase (254 aa).

This sequence belongs to the KdsB family.

The protein resides in the cytoplasm. The catalysed reaction is 3-deoxy-alpha-D-manno-oct-2-ulosonate + CTP = CMP-3-deoxy-beta-D-manno-octulosonate + diphosphate. The protein operates within nucleotide-sugar biosynthesis; CMP-3-deoxy-D-manno-octulosonate biosynthesis; CMP-3-deoxy-D-manno-octulosonate from 3-deoxy-D-manno-octulosonate and CTP: step 1/1. Its pathway is bacterial outer membrane biogenesis; lipopolysaccharide biosynthesis. Its function is as follows. Activates KDO (a required 8-carbon sugar) for incorporation into bacterial lipopolysaccharide in Gram-negative bacteria. This is 3-deoxy-manno-octulosonate cytidylyltransferase from Pseudomonas putida (strain GB-1).